The chain runs to 519 residues: S-type anion channel SLAH2 (519 aa).

The segment at 1-31 (MNNPRSVSPLVSPANHSDLLENQRQSGSGDF) is disordered. The Cytoplasmic portion of the chain corresponds to 1 to 140 (MNNPRSVSPL…LPEDKTWPFL (140 aa)). Polar residues predominate over residues 20 to 29 (LENQRQSGSG). Phosphoserine occurs at positions 77 and 85. A helical membrane pass occupies residues 141–161 (LRFPITSYGMCLGVSSQAIMW). Over 162–185 (KTLATTEAEKFLHVTQVINHVLWW) the chain is Extracellular. Residues 186–206 (ISLLLLLAVSITYLFKTILFF) form a helical membrane-spanning segment. The Cytoplasmic segment spans residues 207–220 (EAVRREFRHPIRVN). Residues 221 to 241 (FFFAPLISILFLALGIPHSII) form a helical membrane-spanning segment. Topologically, residues 242 to 247 (SHLPST) are extracellular. A helical transmembrane segment spans residues 248 to 268 (LWYFLMAPILFLEMKIYGQWM). At 269-281 (SGGQRRLSKVANP) the chain is on the cytoplasmic side. Residues 282–302 (TNHLSIVGNFAGALLGASMGL) form a helical membrane-spanning segment. The Extracellular segment spans residues 303 to 304 (KE). The chain crosses the membrane as a helical span at residues 305 to 325 (GPIFFFAIGLAYYLVLFVTLY). Residues 326–340 (QRLPTNETLPKELHP) are Cytoplasmic-facing. A helical membrane pass occupies residues 341–361 (VFFLFVAAPAVASMAWTKISA). Ser-362 is a topological domain (extracellular). A helical membrane pass occupies residues 363-383 (FDLGSRLAYFISLFLYFSLVC). The Cytoplasmic segment spans residues 384 to 389 (RINLFR). Residues 390 to 410 (GFKFSLAWWAYTFPMTAVASA) traverse the membrane as a helical segment. Topologically, residues 411–424 (TIKYSDEVTGVATK) are extracellular. The chain crosses the membrane as a helical span at residues 425-445 (ILSVVMSGAATLTVIAVLGLT). The Cytoplasmic segment spans residues 446–519 (VMHAFVQRDL…VDSSTVQNSN (74 aa)). Residues 495–519 (PEDNQIDLESPPLVNVDSSTVQNSN) form a disordered region. Positions 510-519 (VDSSTVQNSN) are enriched in polar residues.

The protein belongs to the SLAC1 S-type anion channel family. In terms of assembly, homotrimer. In terms of tissue distribution, expressed in lateral root primordia and tap root tips.

It is found in the cell membrane. In terms of biological role, slow, weak voltage-dependent S-type anion efflux channel involved in maintenance of anion homeostasis. This chain is S-type anion channel SLAH2 (SLAH2), found in Arabidopsis thaliana (Mouse-ear cress).